We begin with the raw amino-acid sequence, 481 residues long: Guanine nucleotide exchange factor C9orf72 (481 aa).

In terms of domain architecture, uDENN C9ORF72-type spans 23 to 194; sequence SPLLAATFAY…ELLSSMKSHS (172 aa). One can recognise a cDENN C9ORF72-type domain in the interval 200–343; that stretch reads DIADTVLNDD…SELTAFWRAT (144 aa). A dDENN C9ORF72-type domain is found at 370–464; that stretch reads VLHRDTLVKA…IKPGLHSFIF (95 aa). Residues 461–481 form a required for the homodimerization of the C9orf72-SMCR8 complex region; that stretch reads SFIFGRPFYTSVQERDVLMTF.

In terms of assembly, component of the C9orf72-SMCR8 complex, at least composed of C9orf72, SMCR8 and WDR41. The complex is formed of two protomers, each individually consisting of one molecule each of C9orf72, SMCR8 and WDR41. The protomers homodimerize via an interaction between C9orf72 (via C-terminus) and SMCR8 (via N-terminus). Within each protomer SMCR8 (via DENN domain) acts as a bridging protein between WDR41 (via C-terminus and N-terminus) and C9orf72 (via C-terminus). The C9orf72-SMCR8 complex associates with the ULK1/ATG1 kinase complex. Interacts with ULK1/ATG1 kinase complex members ULK1, ATG13 and RB1CC1. Interacts with SMCR8; the interaction is direct. Interacts with HNRNPA1, HNRNPA2B1 and UBQLN2. Interacts with small Rab GTPase RAB1A; the interaction mediates recruitment of RAB1A to the ULK1/ATG1 kinase complex. Also interacts with small Rab GTPase RAB7A. Interacts with cofilin. Interacts with GTP-binding proteins ARF1 and ARF6. Interacts with the DLG4/PSD-95. Interacts with CARM1 (via PH domain-like fold). Interacts with RAB39A and RAB39B (in GDP-bound forms); functions as GEF for RAB39A and RAB39B. In terms of tissue distribution, both isoforms are widely expressed, including kidney, lung, liver, heart, testis and several brain regions, such as cerebellum. Also expressed in the frontal cortex and in lymphoblasts (at protein level).

It is found in the cytoplasm. The protein resides in the nucleus. The protein localises to the P-body. It localises to the stress granule. Its subcellular location is the endosome. It is found in the lysosome. The protein resides in the cytoplasmic vesicle. The protein localises to the autophagosome. It localises to the autolysosome. Its subcellular location is the secreted. It is found in the cell projection. The protein resides in the axon. The protein localises to the growth cone. It localises to the perikaryon. Its subcellular location is the dendrite. It is found in the presynapse. The protein resides in the postsynapse. The protein localises to the nucleus membrane. Functionally, acts as a guanine-nucleotide releasing factor (GEF) for Rab GTPases by promoting the conversion of inactive RAB-GDP to the active form RAB-GTP. Acts as a GEF for RAB39A which enables HOPS-mediated autophagosome-lysosome membrane tethering and fusion in mammalian autophagy. Component of the C9orf72-SMCR8 complex where both subunits display GEF activity and that regulates autophagy. As part of the C9orf72-SMCR8-WDR41 (CSW) complex, functions as GEF for RAB8A and RAB39B, thereby promoting autophagosome maturation. As part of the C9orf72-SMCR8 complex, also functions as GTPase activating protein (GAP) for RAB8A and RAB11A in vitro. The C9orf72-SMCR8 complex also acts as a regulator of autophagy initiation by interacting with the ULK1/ATG1 kinase complex and modulating its protein kinase activity. Promotes initiation of autophagy by regulating the RAB1A-dependent trafficking of the ULK1/ATG1 kinase complex to the phagophore which leads to autophagosome formation. Acts as a regulator of mTORC1 signaling by promoting phosphorylation of mTORC1 substrates. Plays a role in endosomal trafficking. May be involved in regulating the maturation of phagosomes to lysosomes. Promotes the lysosomal localization and lysosome-mediated degradation of CARM1 which leads to inhibition of starvation-induced lipid metabolism. Regulates actin dynamics in motor neurons by inhibiting the GTP-binding activity of ARF6, leading to ARF6 inactivation. This reduces the activity of the LIMK1 and LIMK2 kinases which are responsible for phosphorylation and inactivation of cofilin, leading to CFL1/cofilin activation. Positively regulates axon extension and axon growth cone size in spinal motor neurons. Required for SMCR8 protein expression and localization at pre- and post-synaptic compartments in the forebrain, also regulates protein abundance of RAB3A and GRIA1/GLUR1 in post-synaptic compartments in the forebrain and hippocampus. Plays a role within the hematopoietic system in restricting inflammation and the development of autoimmunity. In terms of biological role, regulates stress granule assembly in response to cellular stress. Its function is as follows. Does not play a role in regulation of stress granule assembly in response to cellular stress. This chain is Guanine nucleotide exchange factor C9orf72, found in Homo sapiens (Human).